Reading from the N-terminus, the 549-residue chain is Movement protein Hsp70h (549 aa).

The protein belongs to the heat shock protein 70 family.

It is found in the virion. Functionally, transports viral genome to neighboring plant cells directly through plasmosdesmata, without any budding. The movement protein allows efficient cell to cell propagation, by bypassing the host cell wall barrier. Two movement proteins, p6, Hsp70h and three structural proteins, CP, CPm, and P64 are essential for cell-cell movement. Also plays a role in virion formation. Together with CPm and p64, encapsidates the 5'-terminal portion of the viral genome. The chain is Movement protein Hsp70h from Vitis vinifera (Grape).